We begin with the raw amino-acid sequence, 430 residues long: Trigger factor (430 aa).

One can recognise a PPIase FKBP-type domain in the interval 163-248 (GNIAIIDFKG…IKDIKVKELP (86 aa)).

Belongs to the FKBP-type PPIase family. Tig subfamily.

It localises to the cytoplasm. It carries out the reaction [protein]-peptidylproline (omega=180) = [protein]-peptidylproline (omega=0). Involved in protein export. Acts as a chaperone by maintaining the newly synthesized protein in an open conformation. Functions as a peptidyl-prolyl cis-trans isomerase. This is Trigger factor from Clostridium botulinum (strain Okra / Type B1).